The primary structure comprises 237 residues: Ig heavy chain Mem5 (237 aa).

2 consecutive Ig-like domains span residues 1-119 and 126-218; these read EVKL…LTVS and PSVY…KKIE. Cysteines 22 and 98 form a disulfide. Residues 101–105 form a d segment region; the sequence is VDYGT. The tract at residues 106-120 is JH2 segment; that stretch reads NYDYWGQGTTLTVSS. An intrachain disulfide couples Cys-147 to Cys-202.

The protein resides in the secreted. Its function is as follows. Anti-influenza H3N2 neuraminidase antibody. This is Ig heavy chain Mem5 from Mus musculus (Mouse).